Reading from the N-terminus, the 69-residue chain is uncharacterized protein (69 aa).

A CHCH domain is found at 6–56 (SEECTPAKKKYDACFNDWYANKFLKGDLHNRDCDELFAEYKSCLLKALKTK). 2 consecutive short sequence motifs (cx9C motif) follow at residues 9–19 (CTPAKKKYDAC) and 38–48 (CDELFAEYKSC). 2 disulfides stabilise this stretch: Cys9-Cys48 and Cys19-Cys38.

The protein belongs to the TRIAP1/MDM35 family.

This is an uncharacterized protein from Schizosaccharomyces pombe (strain 972 / ATCC 24843) (Fission yeast).